The sequence spans 740 residues: DNA (cytosine-5)-methyltransferase 3C (740 aa).

Disordered regions lie at residues 75-99 (LTGDGDEDRDGEVGGSSGSGTPVMP) and 248-312 (FKPT…DVTN). An ADD domain is found at 309–441 (DVTNNKGNLE…LQDFFTTDPD (133 aa)). Residues 320-350 (HCLSCGRKDPVSFHPLFEGGLCQSCRDRFLE) form a GATA-type; atypical zinc finger. A PHD-type; atypical zinc finger spans residues 361–417 (QSYCTVCCEGRELLLCSNTSCCRCFCVECLEVLVGAGTAEDVKLQEPWSCYMCLPQR). An SAM-dependent MTase C5-type domain is found at 462–740 (IRVLSLFDGI…APLKDHFACE (279 aa)). The S-adenosyl-L-methionine site is built by I471, T473, E492, D514, and I515. C538 is a catalytic residue. S-adenosyl-L-methionine is bound by residues R719 and W721.

The protein belongs to the class I-like SAM-binding methyltransferase superfamily. C5-methyltransferase family. As to quaternary structure, homodimer. Interacts with DNMT3L. Interacts with SPOCD1; recruiting Dnmt3C to transposons. Specifically expressed in testis.

The protein resides in the nucleus. The catalysed reaction is a 2'-deoxycytidine in DNA + S-adenosyl-L-methionine = a 5-methyl-2'-deoxycytidine in DNA + S-adenosyl-L-homocysteine + H(+). Its function is as follows. DNA methyltransferase that specifically methylates the promoters of evolutionarily young retrotransposons in the male germline. De novo methylation and subsequent repression of transposable elements prevents their mobilization, which is essential for germline integrity. Compared to Dnmt3a and Dnmt3b, shows lower DNA methyltransferase efficiency. In Mus musculus (Mouse), this protein is DNA (cytosine-5)-methyltransferase 3C.